A 199-amino-acid chain; its full sequence is Peroxynitrite isomerase (199 aa).

A GXWXGXG motif is present at residues 20 to 26 (GVWEGTG). H190 provides a ligand contact to heme b.

Belongs to the nitrobindin family. In terms of assembly, homodimer. Heme b is required as a cofactor.

The catalysed reaction is peroxynitrite = nitrate. The protein operates within nitrogen metabolism. In terms of biological role, heme-binding protein able to scavenge peroxynitrite and to protect free L-tyrosine against peroxynitrite-mediated nitration, by acting as a peroxynitrite isomerase that converts peroxynitrite to nitrate. Therefore, this protein likely plays a role in peroxynitrite sensing and in the detoxification of reactive nitrogen and oxygen species (RNS and ROS, respectively). Is able to bind nitric oxide (NO) in vitro, but may act as a sensor of peroxynitrite levels in vivo. The chain is Peroxynitrite isomerase from Clavibacter michiganensis subsp. michiganensis (strain NCPPB 382).